The primary structure comprises 269 residues: 4-hydroxy-tetrahydrodipicolinate reductase (269 aa).

Residues 11–16 and E37 contribute to the NAD(+) site; that span reads GASGRM. R38 serves as a coordination point for NADP(+). NAD(+) contacts are provided by residues 101 to 103 and 125 to 128; these read GTT and AGNM. Residue H158 is the Proton donor/acceptor of the active site. Position 159 (H159) interacts with (S)-2,3,4,5-tetrahydrodipicolinate. K162 acts as the Proton donor in catalysis. 168–169 serves as a coordination point for (S)-2,3,4,5-tetrahydrodipicolinate; sequence GT.

Belongs to the DapB family.

The protein localises to the cytoplasm. It catalyses the reaction (S)-2,3,4,5-tetrahydrodipicolinate + NAD(+) + H2O = (2S,4S)-4-hydroxy-2,3,4,5-tetrahydrodipicolinate + NADH + H(+). It carries out the reaction (S)-2,3,4,5-tetrahydrodipicolinate + NADP(+) + H2O = (2S,4S)-4-hydroxy-2,3,4,5-tetrahydrodipicolinate + NADPH + H(+). It functions in the pathway amino-acid biosynthesis; L-lysine biosynthesis via DAP pathway; (S)-tetrahydrodipicolinate from L-aspartate: step 4/4. Catalyzes the conversion of 4-hydroxy-tetrahydrodipicolinate (HTPA) to tetrahydrodipicolinate. In Ruegeria pomeroyi (strain ATCC 700808 / DSM 15171 / DSS-3) (Silicibacter pomeroyi), this protein is 4-hydroxy-tetrahydrodipicolinate reductase.